A 210-amino-acid chain; its full sequence is Ribonuclease HII (210 aa).

One can recognise an RNase H type-2 domain in the interval 18–208; that stretch reads YPVAGIDEAG…VNDIISQTKL (191 aa). Residues Asp-24, Glu-25, and Asp-116 each coordinate a divalent metal cation.

The protein belongs to the RNase HII family. The cofactor is Mn(2+). Mg(2+) serves as cofactor.

It localises to the cytoplasm. It carries out the reaction Endonucleolytic cleavage to 5'-phosphomonoester.. Functionally, endonuclease that specifically degrades the RNA of RNA-DNA hybrids. The protein is Ribonuclease HII of Endomicrobium trichonymphae.